A 229-amino-acid chain; its full sequence is Nectarin-1 (229 aa).

A signal peptide spans 1-32; that stretch reads MAAFGINSKIFQSMEMAILFLLAISIDRYCFA. Cys42 and Cys57 form a disulfide bridge. The N-linked (GlcNAc...) asparagine glycan is linked to Asn60. A Cupin type-1 domain is found at 69-217; the sequence is LAISKPGATN…TFQINTEDVQ (149 aa). His117, His119, Glu124, and His163 together coordinate Mn(2+).

Monomer. In the absence of manganese, it forms tetrameric and pentameric forms which show superoxide dismutase activity. The cofactor is Mn(2+). As to expression, nectary tissues and to a lower level ovary. Not detected in petals, stems, leaves, roots or other floral tissues.

The protein localises to the secreted. It localises to the extracellular space. Its subcellular location is the apoplast. The enzyme catalyses 2 superoxide + 2 H(+) = H2O2 + O2. Its function is as follows. May interact with bacterial adhesins thereby protecting the reproductive tissues from microbial attack. Has no oxalate oxidase activity. In Nicotiana langsdorffii x Nicotiana sanderae (Ornamental tobacco), this protein is Nectarin-1 (NECI).